Reading from the N-terminus, the 45-residue chain is Large ribosomal subunit protein bL34 (45 aa).

The protein belongs to the bacterial ribosomal protein bL34 family.

The chain is Large ribosomal subunit protein bL34 from Salinispora arenicola (strain CNS-205).